The sequence spans 310 residues: Thioredoxin reductase (310 aa).

35-42 provides a ligand contact to FAD; that stretch reads ERGMPGGQ. The cysteines at positions 134 and 137 are disulfide-linked. Residue 277 to 286 participates in FAD binding; sequence DVRDKGLRQI.

Belongs to the class-II pyridine nucleotide-disulfide oxidoreductase family. Homodimer. It depends on FAD as a cofactor.

It is found in the cytoplasm. It carries out the reaction [thioredoxin]-dithiol + NADP(+) = [thioredoxin]-disulfide + NADPH + H(+). This Staphylococcus epidermidis (strain ATCC 35984 / DSM 28319 / BCRC 17069 / CCUG 31568 / BM 3577 / RP62A) protein is Thioredoxin reductase (trxB).